Here is a 320-residue protein sequence, read N- to C-terminus: ATP-dependent 6-phosphofructokinase (320 aa).

Residues glycine 12, 73–74, and 103–106 each bind ATP; these read RF and GDGS. Aspartate 104 is a binding site for Mg(2+). 126–128 contacts substrate; that stretch reads TID. Catalysis depends on aspartate 128, which acts as the Proton acceptor. ADP is bound at residue arginine 155. Substrate is bound by residues arginine 163 and 170 to 172; that span reads MGR. ADP-binding positions include 186–188 and lysine 212; that span reads GCE. Substrate contacts are provided by residues glutamate 223, arginine 244, and 250–253; that span reads HIQR.

This sequence belongs to the phosphofructokinase type A (PFKA) family. ATP-dependent PFK group I subfamily. Prokaryotic clade 'B1' sub-subfamily. As to quaternary structure, homotetramer. Mg(2+) is required as a cofactor.

It is found in the cytoplasm. It catalyses the reaction beta-D-fructose 6-phosphate + ATP = beta-D-fructose 1,6-bisphosphate + ADP + H(+). The protein operates within carbohydrate degradation; glycolysis; D-glyceraldehyde 3-phosphate and glycerone phosphate from D-glucose: step 3/4. Allosterically activated by ADP and other diphosphonucleosides, and allosterically inhibited by phosphoenolpyruvate. Functionally, catalyzes the phosphorylation of D-fructose 6-phosphate to fructose 1,6-bisphosphate by ATP, the first committing step of glycolysis. The polypeptide is ATP-dependent 6-phosphofructokinase (Buchnera aphidicola subsp. Cinara cedri (strain Cc)).